We begin with the raw amino-acid sequence, 283 residues long: Bifunctional protein FolD (283 aa).

Position 166 to 168 (166 to 168 (GAS)) interacts with NADP(+).

This sequence belongs to the tetrahydrofolate dehydrogenase/cyclohydrolase family. As to quaternary structure, homodimer.

The catalysed reaction is (6R)-5,10-methylene-5,6,7,8-tetrahydrofolate + NADP(+) = (6R)-5,10-methenyltetrahydrofolate + NADPH. It catalyses the reaction (6R)-5,10-methenyltetrahydrofolate + H2O = (6R)-10-formyltetrahydrofolate + H(+). The protein operates within one-carbon metabolism; tetrahydrofolate interconversion. Its function is as follows. Catalyzes the oxidation of 5,10-methylenetetrahydrofolate to 5,10-methenyltetrahydrofolate and then the hydrolysis of 5,10-methenyltetrahydrofolate to 10-formyltetrahydrofolate. This chain is Bifunctional protein FolD, found in Coxiella burnetii (strain CbuK_Q154) (Coxiella burnetii (strain Q154)).